A 412-amino-acid chain; its full sequence is Mast cell carboxypeptidase A (412 aa).

The signal sequence occupies residues 1–10; the sequence is LMGVIYSTLA. Positions 11–104 are cleaved as a propeptide — activation peptide; the sequence is IAPVQFDREK…IDKQFDVKEE (94 aa). The Peptidase M14 domain maps to 113-407; the sequence is KYNDWNKIVS…LSVKFIAKYI (295 aa). Cystine bridges form between C168–C181 and C240–C263. Zn(2+) contacts are provided by H171 and E174. Residue H299 participates in Zn(2+) binding. E373 functions as the Proton donor/acceptor in the catalytic mechanism.

It belongs to the peptidase M14 family. Zn(2+) is required as a cofactor.

It is found in the cytoplasmic vesicle. The protein localises to the secretory vesicle. It catalyses the reaction Release of a C-terminal amino acid, but little or no action with -Asp, -Glu, -Arg, -Lys or -Pro.. The polypeptide is Mast cell carboxypeptidase A (Cpa3) (Rattus norvegicus (Rat)).